Consider the following 425-residue polypeptide: Serine--tRNA ligase (425 aa).

Thr-228–Glu-230 lines the L-serine pocket. Arg-259–Glu-261 provides a ligand contact to ATP. Glu-282 lines the L-serine pocket. Glu-346–Ser-349 serves as a coordination point for ATP. An L-serine-binding site is contributed by Ser-382.

This sequence belongs to the class-II aminoacyl-tRNA synthetase family. Type-1 seryl-tRNA synthetase subfamily. Homodimer. The tRNA molecule binds across the dimer.

The protein localises to the cytoplasm. The catalysed reaction is tRNA(Ser) + L-serine + ATP = L-seryl-tRNA(Ser) + AMP + diphosphate + H(+). It carries out the reaction tRNA(Sec) + L-serine + ATP = L-seryl-tRNA(Sec) + AMP + diphosphate + H(+). Its pathway is aminoacyl-tRNA biosynthesis; selenocysteinyl-tRNA(Sec) biosynthesis; L-seryl-tRNA(Sec) from L-serine and tRNA(Sec): step 1/1. In terms of biological role, catalyzes the attachment of serine to tRNA(Ser). Is also able to aminoacylate tRNA(Sec) with serine, to form the misacylated tRNA L-seryl-tRNA(Sec), which will be further converted into selenocysteinyl-tRNA(Sec). This chain is Serine--tRNA ligase, found in Rickettsia prowazekii (strain Madrid E).